We begin with the raw amino-acid sequence, 448 residues long: Methylenetetrahydrofolate--tRNA-(uracil-5-)-methyltransferase TrmFO (448 aa).

10-15 (GAGLAG) provides a ligand contact to FAD.

The protein belongs to the MnmG family. TrmFO subfamily. The cofactor is FAD.

It is found in the cytoplasm. The catalysed reaction is uridine(54) in tRNA + (6R)-5,10-methylene-5,6,7,8-tetrahydrofolate + NADH + H(+) = 5-methyluridine(54) in tRNA + (6S)-5,6,7,8-tetrahydrofolate + NAD(+). The enzyme catalyses uridine(54) in tRNA + (6R)-5,10-methylene-5,6,7,8-tetrahydrofolate + NADPH + H(+) = 5-methyluridine(54) in tRNA + (6S)-5,6,7,8-tetrahydrofolate + NADP(+). Its function is as follows. Catalyzes the folate-dependent formation of 5-methyl-uridine at position 54 (M-5-U54) in all tRNAs. The chain is Methylenetetrahydrofolate--tRNA-(uracil-5-)-methyltransferase TrmFO from Lactococcus lactis subsp. cremoris (strain MG1363).